The primary structure comprises 230 residues: Leucyl/phenylalanyl-tRNA--protein transferase (230 aa).

Belongs to the L/F-transferase family.

It localises to the cytoplasm. It carries out the reaction N-terminal L-lysyl-[protein] + L-leucyl-tRNA(Leu) = N-terminal L-leucyl-L-lysyl-[protein] + tRNA(Leu) + H(+). It catalyses the reaction N-terminal L-arginyl-[protein] + L-leucyl-tRNA(Leu) = N-terminal L-leucyl-L-arginyl-[protein] + tRNA(Leu) + H(+). The enzyme catalyses L-phenylalanyl-tRNA(Phe) + an N-terminal L-alpha-aminoacyl-[protein] = an N-terminal L-phenylalanyl-L-alpha-aminoacyl-[protein] + tRNA(Phe). Functions in the N-end rule pathway of protein degradation where it conjugates Leu, Phe and, less efficiently, Met from aminoacyl-tRNAs to the N-termini of proteins containing an N-terminal arginine or lysine. In Erwinia tasmaniensis (strain DSM 17950 / CFBP 7177 / CIP 109463 / NCPPB 4357 / Et1/99), this protein is Leucyl/phenylalanyl-tRNA--protein transferase.